The primary structure comprises 241 residues: Ribonuclease PH (241 aa).

Residues R87 and G125–R127 contribute to the phosphate site.

It belongs to the RNase PH family. In terms of assembly, homohexameric ring arranged as a trimer of dimers.

It carries out the reaction tRNA(n+1) + phosphate = tRNA(n) + a ribonucleoside 5'-diphosphate. Phosphorolytic 3'-5' exoribonuclease that plays an important role in tRNA 3'-end maturation. Removes nucleotide residues following the 3'-CCA terminus of tRNAs; can also add nucleotides to the ends of RNA molecules by using nucleoside diphosphates as substrates, but this may not be physiologically important. Probably plays a role in initiation of 16S rRNA degradation (leading to ribosome degradation) during starvation. This Nitrosomonas europaea (strain ATCC 19718 / CIP 103999 / KCTC 2705 / NBRC 14298) protein is Ribonuclease PH.